Here is a 145-residue protein sequence, read N- to C-terminus: U1 small nuclear ribonucleoprotein C (145 aa).

Residues 4-36 form a Matrin-type zinc finger; it reads YYCDYCDTYLTHDSPSVRKTHCTGRKHRDNVKF. Positions 67–91 are disordered; it reads FAGGPGGAPPKPAGVSIPPPNMGAP. Over residues 73–91 the composition is skewed to pro residues; it reads GAPPKPAGVSIPPPNMGAP.

Belongs to the U1 small nuclear ribonucleoprotein C family. In terms of assembly, U1 snRNP is composed of the 7 core Sm proteins B/B', D1, D2, D3, E, F and G that assemble in a heptameric protein ring on the Sm site of the small nuclear RNA to form the core snRNP, and at least 3 U1 snRNP-specific proteins U1-70K, U1-A and U1-C. U1-C interacts with U1 snRNA and the 5' splice-site region of the pre-mRNA.

The protein localises to the nucleus. In terms of biological role, component of the spliceosomal U1 snRNP, which is essential for recognition of the pre-mRNA 5' splice-site and the subsequent assembly of the spliceosome. U1-C is directly involved in initial 5' splice-site recognition for both constitutive and regulated alternative splicing. The interaction with the 5' splice-site seems to precede base-pairing between the pre-mRNA and the U1 snRNA. Stimulates commitment or early (E) complex formation by stabilizing the base pairing of the 5' end of the U1 snRNA and the 5' splice-site region. Regulates alternative splicing of a distinct group of target genes. The chain is U1 small nuclear ribonucleoprotein C from Drosophila melanogaster (Fruit fly).